The sequence spans 423 residues: MNILQNLKESDPIISNLINSEKNRQETHLELIASENFASMAVMQAQGSVLTNKYAEGLPQKRYYGGCEFVDEIEELAIERAKQLFDADWANVQPHSGAQANAAVFLSLLKPGDTILGMDLSHGGHLTHGSPVNMSGKWFNAVHYGVDKETNKLNFNEIRDIALATKPKLIICGYSAYPRKIDFESFRRIADEVGAFLMADIAHIAGLVATKLHPNPIPYCDVVTTTTHKTLRGPRGGLILCKDKEFGKKFDKSVFPGTQGGPLEHIIAAKAVAFGEALKPNFVNYSKQVINNAKVLSSTLIKRGIDIVSGGTDNHIVLLDLRSINMTGKVADLLVSEVNITANKNTVPFDPESPFVTSGLRLGTAALTTRGFNDDAFVEVGEIIADRLLNPDDLLTEKKCKERVLTLCNRFPLYEVELEASIK.

(6S)-5,6,7,8-tetrahydrofolate-binding positions include leucine 120 and glycine 124–leucine 126. An N6-(pyridoxal phosphate)lysine modification is found at lysine 229. Residue serine 353–phenylalanine 355 coordinates (6S)-5,6,7,8-tetrahydrofolate.

It belongs to the SHMT family. As to quaternary structure, homodimer. It depends on pyridoxal 5'-phosphate as a cofactor.

The protein localises to the cytoplasm. It catalyses the reaction (6R)-5,10-methylene-5,6,7,8-tetrahydrofolate + glycine + H2O = (6S)-5,6,7,8-tetrahydrofolate + L-serine. Its pathway is one-carbon metabolism; tetrahydrofolate interconversion. It participates in amino-acid biosynthesis; glycine biosynthesis; glycine from L-serine: step 1/1. Catalyzes the reversible interconversion of serine and glycine with tetrahydrofolate (THF) serving as the one-carbon carrier. This reaction serves as the major source of one-carbon groups required for the biosynthesis of purines, thymidylate, methionine, and other important biomolecules. Also exhibits THF-independent aldolase activity toward beta-hydroxyamino acids, producing glycine and aldehydes, via a retro-aldol mechanism. The protein is Serine hydroxymethyltransferase of Prochlorococcus marinus subsp. pastoris (strain CCMP1986 / NIES-2087 / MED4).